Consider the following 464-residue polypeptide: JmjC domain-containing protein 1 (464 aa).

The 168-residue stretch at L182–Y349 folds into the JmjC domain.

The polypeptide is JmjC domain-containing protein 1 (jmj1) (Schizosaccharomyces pombe (strain 972 / ATCC 24843) (Fission yeast)).